The following is a 213-amino-acid chain: Large ribosomal subunit protein uL1 (213 aa).

Belongs to the universal ribosomal protein uL1 family. As to quaternary structure, part of the 50S ribosomal subunit.

Binds directly to 23S rRNA. Probably involved in E site tRNA release. Functionally, protein L1 is also a translational repressor protein, it controls the translation of its operon by binding to its mRNA. This Methanococcus voltae protein is Large ribosomal subunit protein uL1.